The following is a 1139-amino-acid chain: DNA-directed RNA polymerase subunit beta (1139 aa).

Residues 1085–1139 (ADTSNRHTPSRPTYESVTSEDLSPSPAFTRVLRTADANASRSLEEDEDEEEEEDF) form a disordered region. Residues 1086 to 1106 (DTSNRHTPSRPTYESVTSEDL) are compositionally biased toward polar residues. The span at 1128–1139 (EEDEDEEEEEDF) shows a compositional bias: acidic residues.

This sequence belongs to the RNA polymerase beta chain family. In cyanobacteria the RNAP catalytic core is composed of 2 alpha, 1 beta, 1 beta', 1 gamma and 1 omega subunit. When a sigma factor is associated with the core the holoenzyme is formed, which can initiate transcription.

It catalyses the reaction RNA(n) + a ribonucleoside 5'-triphosphate = RNA(n+1) + diphosphate. DNA-dependent RNA polymerase catalyzes the transcription of DNA into RNA using the four ribonucleoside triphosphates as substrates. The chain is DNA-directed RNA polymerase subunit beta from Synechococcus sp. (strain JA-2-3B'a(2-13)) (Cyanobacteria bacterium Yellowstone B-Prime).